A 288-amino-acid polypeptide reads, in one-letter code: Transformer-2 protein homolog beta (288 aa).

2 disordered regions span residues 1–114 and 196–225; these read MSDS…RANP and TKRP…YDRG. Position 2 is an N-acetylserine (Ser2). Phosphoserine occurs at positions 2, 4, and 14. A compositionally biased stretch (low complexity) spans 17–28; the sequence is ASRSGSAHGSGK. Ser29 is modified (phosphoserine). Thr33 bears the Phosphothreonine mark. Residues 59–109 are compositionally biased toward basic residues; it reads RSRRSSRRHYTRSRSRSRSHRRSRSRSYSRDYRRRHSHSHSPMSTRRRHVG. A phosphoserine mark is found at Ser83, Ser85, Ser87, Ser95, Ser97, and Ser99. Thr103 is modified (phosphothreonine). The 79-residue stretch at 118–196 folds into the RRM domain; that stretch reads CCLGVFGLSL…RRIRVDFSIT (79 aa). Residues 193-230 form a linker region; it reads FSITKRPHTPTPGIYMGRPTYGSSRRRDYYDRGYDRGY. Residue Lys197 forms a Glycyl lysine isopeptide (Lys-Gly) (interchain with G-Cter in SUMO2) linkage. Phosphothreonine occurs at positions 201 and 203. Phosphoserine is present on residues Ser215 and Ser237. Position 241 is an asymmetric dimethylarginine; alternate (Arg241). The residue at position 241 (Arg241) is a Dimethylated arginine; alternate. Arg241 is modified (omega-N-methylarginine; alternate). The disordered stretch occupies residues 242 to 288; it reads GGGGGGGGWRAAQDRDQIYRRRSPSPYYSRGGYRSRSRSRSYSPRRY. Positions 274–288 are enriched in basic residues; the sequence is YRSRSRSRSYSPRRY.

This sequence belongs to the splicing factor SR family. Found in a pre-mRNA exonic splicing enhancer (ESE) complex with TRA2B/SFRS10, SNRNP70, SNRPA1 and SRRM1. Binds to A3 enhancer proteins SFRS4, SFRS5, SFRS6 and SFRS9. Interacts with CPSF6, RBMY1A1, RBMX, RNPS1 and phosphorylated SFRS13A. Interacts with SAFB/SAFB1. Interacts with ILDR1 (via C-terminus) and ILDR2. In terms of processing, phosphorylated in the RS domains.

The protein localises to the nucleus. Sequence-specific RNA-binding protein which participates in the control of pre-mRNA splicing. Can either activate or suppress exon inclusion. Acts additively with RBMX to promote exon 7 inclusion of the survival motor neuron SMN2. Activates the splicing of MAPT/Tau exon 10. Alters pre-mRNA splicing patterns by antagonizing the effects of splicing regulators, like RBMX. Binds to the AG-rich SE2 domain in the SMN exon 7 RNA. Binds to pre-mRNA. In Bos taurus (Bovine), this protein is Transformer-2 protein homolog beta (TRA2B).